The chain runs to 162 residues: MDEKDLATQPEEAGQDPRLPGPHEDPRRQEGVEAEKAEGPLAPHPQGERLSQPPPAAGGKLLSLKGDRAFQRLRQGRMGRGRFLNVKWLPASELRVGIVVSKKVGKAVVRNRIKRRLREILRRLHLPKAHLLVIASPEAREATYAELFQDLIRALKKSGLIQ.

The interval 1–63 (MDEKDLATQP…PPAAGGKLLS (63 aa)) is disordered. Basic and acidic residues predominate over residues 21 to 38 (GPHEDPRRQEGVEAEKAE).

This sequence belongs to the RnpA family. In terms of assembly, consists of a catalytic RNA component (M1 or rnpB) and a protein subunit.

The catalysed reaction is Endonucleolytic cleavage of RNA, removing 5'-extranucleotides from tRNA precursor.. Functionally, RNaseP catalyzes the removal of the 5'-leader sequence from pre-tRNA to produce the mature 5'-terminus. It can also cleave other RNA substrates such as 4.5S RNA. The protein component plays an auxiliary but essential role in vivo by binding to the 5'-leader sequence and broadening the substrate specificity of the ribozyme. The protein is Ribonuclease P protein component of Thermus scotoductus.